We begin with the raw amino-acid sequence, 394 residues long: Elongation factor Tu 1 (394 aa).

One can recognise a tr-type G domain in the interval 10-204; sequence KPHVNVGTIG…ALDSYIPEPQ (195 aa). Positions 19–26 are G1; it reads GHVDHGKT. 19–26 is a binding site for GTP; that stretch reads GHVDHGKT. A Mg(2+)-binding site is contributed by T26. The interval 60–64 is G2; it reads GITIS. The interval 81–84 is G3; that stretch reads DCPG. GTP contacts are provided by residues 81–85 and 136–139; these read DCPGH and NKCD. Positions 136–139 are G4; that stretch reads NKCD. Residues 174–176 are G5; sequence SAL.

This sequence belongs to the TRAFAC class translation factor GTPase superfamily. Classic translation factor GTPase family. EF-Tu/EF-1A subfamily. In terms of assembly, monomer.

The protein localises to the cytoplasm. It catalyses the reaction GTP + H2O = GDP + phosphate + H(+). Its function is as follows. GTP hydrolase that promotes the GTP-dependent binding of aminoacyl-tRNA to the A-site of ribosomes during protein biosynthesis. This chain is Elongation factor Tu 1, found in Pseudoalteromonas translucida (strain TAC 125).